A 994-amino-acid polypeptide reads, in one-letter code: Chloride channel protein E (994 aa).

The segment at 1-33 is disordered; that stretch reads MTRKENEESESLSSSSSPIDNSNNNNNNNNHSI. At 1-163 the chain is on the cytoplasmic side; it reads MTRKENEESE…HWLGKERIST (163 aa). The segment covering 11-32 has biased composition (low complexity); it reads SLSSSSSPIDNSNNNNNNNNHS. The next 11 helical transmembrane spans lie at 164–184, 227–247, 271–291, 300–320, 334–354, 362–382, 410–430, 449–469, 505–525, 527–547, and 554–574; these read LLFI…CDFL, IVFV…ISFI, VLGF…SAAG, FMHA…FGAI, ALTS…LFAI, VMGN…IFFL, LITF…FVFI, IILV…AGPL, LLVF…LPIP, GAIT…GEIL, and QAIE…SGTI. The region spanning 644–705 is the CBS 1 domain; sequence MKKNINYLSM…LDIHIENIEQ (62 aa). Disordered stretches follow at residues 715 to 767, 802 to 822, and 846 to 872; these read FVNN…NSEN, IKPN…SDFE, and DENS…GDGI. Composition is skewed to low complexity over residues 717–764 and 809–822; these read NNNN…NSNN and SSSN…SDFE. Over residues 859–870 the composition is skewed to acidic residues; it reads HDDEDDDEEEGD. The CBS 2 domain maps to 944-994; sequence MDLAPSQVPDLTPLNKVFHLFTMLGLGFTYVTSLGKLVGVITKNSLMEQDL.

This sequence belongs to the chloride channel (TC 2.A.49) family.

The protein localises to the membrane. Its function is as follows. Voltage-gated chloride channel. Chloride channels may have several functions including the regulation of cell volume, membrane potential stabilization and signal transduction. The polypeptide is Chloride channel protein E (clcE) (Dictyostelium discoideum (Social amoeba)).